A 196-amino-acid polypeptide reads, in one-letter code: Holliday junction branch migration complex subunit RuvA (196 aa).

The domain I stretch occupies residues Met1–Ala63. Positions Asp64 to Thr136 are domain II. Residues Thr136–Glu140 form a flexible linker region. Residues Ser141–Pro196 are domain III.

The protein belongs to the RuvA family. In terms of assembly, homotetramer. Forms an RuvA(8)-RuvB(12)-Holliday junction (HJ) complex. HJ DNA is sandwiched between 2 RuvA tetramers; dsDNA enters through RuvA and exits via RuvB. An RuvB hexamer assembles on each DNA strand where it exits the tetramer. Each RuvB hexamer is contacted by two RuvA subunits (via domain III) on 2 adjacent RuvB subunits; this complex drives branch migration. In the full resolvosome a probable DNA-RuvA(4)-RuvB(12)-RuvC(2) complex forms which resolves the HJ.

It localises to the cytoplasm. In terms of biological role, the RuvA-RuvB-RuvC complex processes Holliday junction (HJ) DNA during genetic recombination and DNA repair, while the RuvA-RuvB complex plays an important role in the rescue of blocked DNA replication forks via replication fork reversal (RFR). RuvA specifically binds to HJ cruciform DNA, conferring on it an open structure. The RuvB hexamer acts as an ATP-dependent pump, pulling dsDNA into and through the RuvAB complex. HJ branch migration allows RuvC to scan DNA until it finds its consensus sequence, where it cleaves and resolves the cruciform DNA. In Acidothermus cellulolyticus (strain ATCC 43068 / DSM 8971 / 11B), this protein is Holliday junction branch migration complex subunit RuvA.